A 246-amino-acid polypeptide reads, in one-letter code: 3-deoxy-manno-octulosonate cytidylyltransferase (246 aa).

Belongs to the KdsB family.

The protein localises to the cytoplasm. The enzyme catalyses 3-deoxy-alpha-D-manno-oct-2-ulosonate + CTP = CMP-3-deoxy-beta-D-manno-octulosonate + diphosphate. The protein operates within nucleotide-sugar biosynthesis; CMP-3-deoxy-D-manno-octulosonate biosynthesis; CMP-3-deoxy-D-manno-octulosonate from 3-deoxy-D-manno-octulosonate and CTP: step 1/1. Its pathway is bacterial outer membrane biogenesis; lipopolysaccharide biosynthesis. Functionally, activates KDO (a required 8-carbon sugar) for incorporation into bacterial lipopolysaccharide in Gram-negative bacteria. The protein is 3-deoxy-manno-octulosonate cytidylyltransferase of Leptospira biflexa serovar Patoc (strain Patoc 1 / Ames).